The chain runs to 311 residues: Pyrimidine-specific ribonucleoside hydrolase RihA (311 aa).

The active site involves His-240.

Belongs to the IUNH family. RihA subfamily.

In terms of biological role, hydrolyzes cytidine or uridine to ribose and cytosine or uracil, respectively. In Shigella boydii serotype 4 (strain Sb227), this protein is Pyrimidine-specific ribonucleoside hydrolase RihA.